The sequence spans 104 residues: uncharacterized protein (104 aa).

This is an uncharacterized protein from Schizosaccharomyces pombe (strain 972 / ATCC 24843) (Fission yeast).